We begin with the raw amino-acid sequence, 428 residues long: Enolase (428 aa).

Gln-163 contributes to the (2R)-2-phosphoglycerate binding site. The active-site Proton donor is Glu-205. Residues Asp-242, Glu-283, and Asp-310 each coordinate Mg(2+). Lys-335, Arg-364, Ser-365, and Lys-386 together coordinate (2R)-2-phosphoglycerate. The Proton acceptor role is filled by Lys-335.

This sequence belongs to the enolase family. The cofactor is Mg(2+).

The protein localises to the cytoplasm. Its subcellular location is the secreted. It localises to the cell surface. The catalysed reaction is (2R)-2-phosphoglycerate = phosphoenolpyruvate + H2O. Its pathway is carbohydrate degradation; glycolysis; pyruvate from D-glyceraldehyde 3-phosphate: step 4/5. Functionally, catalyzes the reversible conversion of 2-phosphoglycerate (2-PG) into phosphoenolpyruvate (PEP). It is essential for the degradation of carbohydrates via glycolysis. This is Enolase from Streptomyces avermitilis (strain ATCC 31267 / DSM 46492 / JCM 5070 / NBRC 14893 / NCIMB 12804 / NRRL 8165 / MA-4680).